We begin with the raw amino-acid sequence, 211 residues long: MNPVASTSALNLARSLYEAGIRNEAVLRAVANTPREQFLEPALGHKAYENTALPIGQGQTISQPYIVARMTEIILQNKPSKVLEIGTGSGYQAAVLAQLVPQLCTVERIKSLQIQARQRLKKLDLHNVAFKYGDGWQGWPSKGPYDAIMVTAAASSVPEALVAQLADGGVLVIPVGELSQQLLKLTRVGNQFTSEVIENVRFVPLVSGELA.

The active site involves serine 62.

It belongs to the methyltransferase superfamily. L-isoaspartyl/D-aspartyl protein methyltransferase family.

Its subcellular location is the cytoplasm. The catalysed reaction is [protein]-L-isoaspartate + S-adenosyl-L-methionine = [protein]-L-isoaspartate alpha-methyl ester + S-adenosyl-L-homocysteine. In terms of biological role, catalyzes the methyl esterification of L-isoaspartyl residues in peptides and proteins that result from spontaneous decomposition of normal L-aspartyl and L-asparaginyl residues. It plays a role in the repair and/or degradation of damaged proteins. This Shewanella pealeana (strain ATCC 700345 / ANG-SQ1) protein is Protein-L-isoaspartate O-methyltransferase.